The chain runs to 142 residues: Putative pre-16S rRNA nuclease (142 aa).

Belongs to the YqgF nuclease family.

Its subcellular location is the cytoplasm. Could be a nuclease involved in processing of the 5'-end of pre-16S rRNA. In Ruminiclostridium cellulolyticum (strain ATCC 35319 / DSM 5812 / JCM 6584 / H10) (Clostridium cellulolyticum), this protein is Putative pre-16S rRNA nuclease.